A 197-amino-acid chain; its full sequence is Potassium-transporting ATPase KdpC subunit (197 aa).

Residues 9–29 form a helical membrane-spanning segment; it reads LVVTLLLAALLCGAYPVLVTG.

This sequence belongs to the KdpC family. In terms of assembly, the system is composed of three essential subunits: KdpA, KdpB and KdpC.

The protein localises to the cell inner membrane. Its function is as follows. Part of the high-affinity ATP-driven potassium transport (or Kdp) system, which catalyzes the hydrolysis of ATP coupled with the electrogenic transport of potassium into the cytoplasm. This subunit acts as a catalytic chaperone that increases the ATP-binding affinity of the ATP-hydrolyzing subunit KdpB by the formation of a transient KdpB/KdpC/ATP ternary complex. This Nitratidesulfovibrio vulgaris (strain DSM 19637 / Miyazaki F) (Desulfovibrio vulgaris) protein is Potassium-transporting ATPase KdpC subunit.